Reading from the N-terminus, the 417-residue chain is Solute carrier family 25 member 46-A (417 aa).

A compositionally biased stretch (basic and acidic residues) spans 1–13 (MQPRRPDRFDGLE). A disordered region spans residues 1–90 (MQPRRPDRFD…AFGEENSNSA (90 aa)). The span at 31–41 (SSFPARSFSSS) shows a compositional bias: low complexity. One copy of the Solcar 1 repeat lies at 95–186 (QLNRFAGFGI…GILSEFTHLP (92 aa)). 6 helical membrane passes run 102 to 122 (FGIGLASLFTENVLAHPCIVL), 162 to 182 (MGSTFIVQGISLGAEGILSEF), 198 to 218 (IGGHLLLKGLVYVIVTPFYSA), 257 to 277 (LLPLLVLTFPTVLHGILHYIV), 313 to 333 (FPELIANFAASLCADVLLYPL), and 382 to 402 (LGFYKGFGAVVVQYTLHAIVL). A Solcar 2 repeat occupies 310–415 (EDYFPELIAN…KIIYSSVVQT (106 aa)).

This sequence belongs to the mitochondrial carrier (TC 2.A.29) family.

It localises to the mitochondrion outer membrane. In terms of biological role, may play a role in mitochondrial dynamics by controlling mitochondrial membrane fission. The polypeptide is Solute carrier family 25 member 46-A (slc25a46-a) (Xenopus laevis (African clawed frog)).